A 303-amino-acid chain; its full sequence is Tyrosine recombinase XerC (303 aa).

Positions 1 to 85 (MRADLDAFLE…ATRGLYQYLL (85 aa)) constitute a Core-binding (CB) domain. The 180-residue stretch at 106–285 (KLPRTLDADR…DFQHLASVYD (180 aa)) folds into the Tyr recombinase domain. Active-site residues include Arg-146, Lys-170, His-237, Arg-240, and His-263. Tyr-272 (O-(3'-phospho-DNA)-tyrosine intermediate) is an active-site residue.

The protein belongs to the 'phage' integrase family. XerC subfamily. In terms of assembly, forms a cyclic heterotetrameric complex composed of two molecules of XerC and two molecules of XerD.

The protein localises to the cytoplasm. In terms of biological role, site-specific tyrosine recombinase, which acts by catalyzing the cutting and rejoining of the recombining DNA molecules. The XerC-XerD complex is essential to convert dimers of the bacterial chromosome into monomers to permit their segregation at cell division. It also contributes to the segregational stability of plasmids. The sequence is that of Tyrosine recombinase XerC from Pseudomonas aeruginosa (strain LESB58).